Reading from the N-terminus, the 440-residue chain is Ribosomal protein uS12 methylthiotransferase RimO (440 aa).

The MTTase N-terminal domain maps to 8–125; the sequence is LRCHAISLGC…WNEQILLALN (118 aa). Cysteine 17, cysteine 52, cysteine 87, cysteine 152, cysteine 156, and cysteine 159 together coordinate [4Fe-4S] cluster. One can recognise a Radical SAM core domain in the interval 138–368; it reads TTGKSYAWLK…MEIQLKISEK (231 aa). Residues 371–439 enclose the TRAM domain; the sequence is KNFVGKRLSL…SYDLVALADS (69 aa).

It belongs to the methylthiotransferase family. RimO subfamily. It depends on [4Fe-4S] cluster as a cofactor.

The protein resides in the cytoplasm. It carries out the reaction L-aspartate(89)-[ribosomal protein uS12]-hydrogen + (sulfur carrier)-SH + AH2 + 2 S-adenosyl-L-methionine = 3-methylsulfanyl-L-aspartate(89)-[ribosomal protein uS12]-hydrogen + (sulfur carrier)-H + 5'-deoxyadenosine + L-methionine + A + S-adenosyl-L-homocysteine + 2 H(+). In terms of biological role, catalyzes the methylthiolation of an aspartic acid residue of ribosomal protein uS12. This is Ribosomal protein uS12 methylthiotransferase RimO from Lawsonia intracellularis (strain PHE/MN1-00).